The chain runs to 426 residues: MELFSQSSRPVAKVMKSIRPVDFMHYVLVRFFQHNCTQIAGSLTFTTLLSLVPMLAIGLSVIAAFPAFAEFSDRIKEFILTTMVPEAANKVISVYMQQFADNAAKLTAIGIAFLGVTALALMLTIDEALNSIWRVSRLRPLLHRLLIYWSVLTIGPLLIGASLSLTSWLMTASRGFTRDIPGGDIMLLRLSPLVLTSIAFSASYLIVPNRQVAWRHAIAGGVAAAIGFEIMKEGFAFYITRFPTYQAVYGTFATIPIFLLWLYLSWLMVLLGAVIAASLSSWRFREWRDDPNARGKQFFDALRLLGILGEALKAGKVETALSLQQQLMLSPEEVERILELMVKANFVRQVQEGGWVQILDPAEIRIADVYRLFAFRPEALRGTAGGDTRLEQLLDDIAVGIDEKMSLPLSQLFTSAEPEPPAEMSA.

The next 6 helical transmembrane spans lie at 48-68 (LLSLVPMLAIGLSVIAAFPAF), 106-126 (LTAIGIAFLGVTALALMLTID), 145-165 (LLIYWSVLTIGPLLIGASLSL), 187-207 (LLRLSPLVLTSIAFSASYLIV), 217-237 (AIAGGVAAAIGFEIMKEGFAF), and 255-275 (IPIFLLWLYLSWLMVLLGAVI).

This sequence belongs to the UPF0761 family.

The protein localises to the cell inner membrane. The chain is UPF0761 membrane protein Nmul_A0452 from Nitrosospira multiformis (strain ATCC 25196 / NCIMB 11849 / C 71).